A 181-amino-acid polypeptide reads, in one-letter code: MEAVHDFYPILFLVILFIVLYIAIKTGVFAHFKETFRLQNLLWLLGFVIVGYILGNIAHYLYLRFVPALDTIVENEATNNFVDSFLPTWFVYILMVVIAPIYEELMFREYFYRFFSHKWLAYILSILLFTLIHTRLTWSFFEYLPMSVIVTSTFHRYKRVSDSIIVHGGYNLMVLIFHIII.

5 helical membrane-spanning segments follow: residues 10–30 (ILFL…GVFA), 41–61 (LLWL…AHYL), 81–101 (FVDS…IAPI), 114–134 (FFSH…LIHT), and 161–181 (SDSI…HIII).

It belongs to the UPF0177 family.

The protein localises to the cell membrane. The protein is UPF0177 protein YbdI (ybdI) of Lactococcus lactis subsp. lactis (strain IL1403) (Streptococcus lactis).